The following is a 510-amino-acid chain: GMP synthase [glutamine-hydrolyzing] (510 aa).

Positions 5-195 (LVIVVDFGGQ…LYEICKADGD (191 aa)) constitute a Glutamine amidotransferase type-1 domain. Catalysis depends on C82, which acts as the Nucleophile. Residues H169 and E171 contribute to the active site. Residues 196–385 (WTMENFLEEQ…LEMPEYLVYR (190 aa)) enclose the GMPS ATP-PPase domain. Residue 223-229 (SGGVDSS) coordinates ATP.

Homodimer.

It carries out the reaction XMP + L-glutamine + ATP + H2O = GMP + L-glutamate + AMP + diphosphate + 2 H(+). Its pathway is purine metabolism; GMP biosynthesis; GMP from XMP (L-Gln route): step 1/1. In terms of biological role, catalyzes the synthesis of GMP from XMP. This Finegoldia magna (strain ATCC 29328 / DSM 20472 / WAL 2508) (Peptostreptococcus magnus) protein is GMP synthase [glutamine-hydrolyzing].